Here is a 189-residue protein sequence, read N- to C-terminus: Protein OXIDATIVE STRESS 3 LIKE 2 (189 aa).

Disordered stretches follow at residues 22–49 and 128–147; these read SSSTSSDSIGENSDDDEGGENEIESSYN and AMSQREGDSSSSGDDSLPTL. A compositionally biased stretch (acidic residues) spans 33-44; the sequence is NSDDDEGGENEI.

The protein localises to the nucleus. The sequence is that of Protein OXIDATIVE STRESS 3 LIKE 2 from Arabidopsis thaliana (Mouse-ear cress).